The sequence spans 123 residues: Large ribosomal subunit protein bL17 (123 aa).

It belongs to the bacterial ribosomal protein bL17 family. Part of the 50S ribosomal subunit. Contacts protein L32.

The chain is Large ribosomal subunit protein bL17 from Borrelia hermsii (strain HS1 / DAH).